A 629-amino-acid polypeptide reads, in one-letter code: Putrebactin synthase (629 aa).

Belongs to the IucA/IucC family. Homodimer.

It catalyses the reaction 2 N-(3-carboxypropanoyl)-N-hydroxyputrescine + 2 ATP = putrebactin + 2 AMP + 2 diphosphate + 2 H(+). The enzyme catalyses 2 N-(3-carboxypropanoyl)-N-hydroxyputrescine + ATP = pre-putrebactin + AMP + diphosphate + H(+). It carries out the reaction pre-putrebactin + ATP = putrebactin + AMP + diphosphate + H(+). It functions in the pathway siderophore biosynthesis. Its activity is regulated as follows. Requires Mg(2+) for activity. Its function is as follows. Ligase involved in the biosynthesis of the siderophore putrebactin. Catalyzes the ATP-dependent head-to-tail dimerization of N-hydroxy-N-succinyl-putrescine (HSP) to give pre-putrebactin and subsequent macrocyclization of pre-putrebactin to give putrebactin. The chain is Putrebactin synthase from Shewanella sp. (strain MR-4).